Consider the following 387-residue polypeptide: Putative purine permease 15 (387 aa).

The next 10 helical transmembrane spans lie at W44–L64, T84–I104, L122–V142, V150–Y169, F179–G199, Y210–I230, F252–A272, V306–F326, V329–H349, and V354–I374.

The protein belongs to the purine permeases (TC 2.A.7.14) family.

Its subcellular location is the membrane. The polypeptide is Putative purine permease 15 (PUP15) (Arabidopsis thaliana (Mouse-ear cress)).